We begin with the raw amino-acid sequence, 390 residues long: Transforming growth factor beta-1 proprotein (390 aa).

The N-terminal stretch at 1 to 29 is a signal peptide; that stretch reads MPPSGLRLLPLLLPLLWLLVLTPSRPAAG. The tract at residues 30–74 is straightjacket domain; it reads LSTCKTIDMELVKRKRIETIRGQILSKLRLASPPSQGEVPPGPLP. Residues 75–271 form an arm domain region; that stretch reads EAVLALYNST…ATPLERAQHL (197 aa). N-linked (GlcNAc...) asparagine glycosylation is found at asparagine 82, asparagine 136, and asparagine 176. The tract at residues 226–252 is bowtie tail; it reads DSKDNTLQVDINGFTTGRRGDLATIHG. The Cell attachment site motif lies at 244–246; that stretch reads RGD. 4 disulfides stabilise this stretch: cysteine 285–cysteine 294, cysteine 293–cysteine 356, cysteine 322–cysteine 387, and cysteine 326–cysteine 389.

It belongs to the TGF-beta family. In terms of assembly, homodimer; disulfide-linked. Interacts with the serine proteases, HTRA1 and HTRA3: the interaction with either inhibits TGFB1-mediated signaling and the HTRA protease activity is required for this inhibition. May interact with THSD4; this interaction may lead to sequestration by FBN1 microfibril assembly and attenuation of TGFB signaling. Interacts with CD109, DPT and ASPN. Interacts with EFEMP2. Interacts with TSKU; the interaction contributes to regulation of the hair cycle. Interacts with TGFBR3. Homodimer; disulfide-linked. Interacts with transforming growth factor beta-1 (TGF-beta-1) chain; interaction is non-covalent and maintains TGF-beta-1 in a latent state; each latency-associated peptide (LAP) monomer interacts with TGF-beta-1 in the other monomer. Interacts with LTBP1; leading to regulation of TGF-beta-1 activation. Interacts with LRRC32/GARP; leading to regulation of TGF-beta-1 activation on the surface of activated regulatory T-cells (Tregs). Interacts with LRRC33/NRROS; leading to regulation of TGF-beta-1 activation in macrophages and microglia. Interacts (via cell attachment site) with integrins ITGAV and ITGB6 (ITGAV:ITGB6), leading to release of the active TGF-beta-1. Interacts with NREP; the interaction results in a decrease in TGFB1 autoinduction. Interacts with HSP90AB1; inhibits latent TGFB1 activation. As to quaternary structure, homodimer; disulfide-linked. Interacts with TGF-beta receptors (TGFBR1 and TGFBR2), leading to signal transduction. In terms of processing, transforming growth factor beta-1 proprotein: The precursor proprotein is cleaved in the Golgi apparatus by FURIN to form Transforming growth factor beta-1 (TGF-beta-1) and Latency-associated peptide (LAP) chains, which remain non-covalently linked, rendering TGF-beta-1 inactive. N-glycosylated. Deglycosylation leads to activation of Transforming growth factor beta-1 (TGF-beta-1); mechanisms triggering deglycosylation-driven activation of TGF-beta-1 are however unclear.

It is found in the secreted. It localises to the extracellular space. The protein localises to the extracellular matrix. Its function is as follows. Transforming growth factor beta-1 proprotein: Precursor of the Latency-associated peptide (LAP) and Transforming growth factor beta-1 (TGF-beta-1) chains, which constitute the regulatory and active subunit of TGF-beta-1, respectively. Functionally, required to maintain the Transforming growth factor beta-1 (TGF-beta-1) chain in a latent state during storage in extracellular matrix. Associates non-covalently with TGF-beta-1 and regulates its activation via interaction with 'milieu molecules', such as LTBP1, LRRC32/GARP and LRRC33/NRROS, that control activation of TGF-beta-1. Interaction with LRRC33/NRROS regulates activation of TGF-beta-1 in macrophages and microglia. Interaction with LRRC32/GARP controls activation of TGF-beta-1 on the surface of activated regulatory T-cells (Tregs). Interaction with integrins (ITGAV:ITGB6 or ITGAV:ITGB8) results in distortion of the Latency-associated peptide chain and subsequent release of the active TGF-beta-1. Multifunctional protein that regulates the growth and differentiation of various cell types and is involved in various processes, such as normal development, immune function, microglia function and responses to neurodegeneration. Activation into mature form follows different steps: following cleavage of the proprotein in the Golgi apparatus, Latency-associated peptide (LAP) and Transforming growth factor beta-1 (TGF-beta-1) chains remain non-covalently linked rendering TGF-beta-1 inactive during storage in extracellular matrix. At the same time, LAP chain interacts with 'milieu molecules', such as LTBP1, LRRC32/GARP and LRRC33/NRROS that control activation of TGF-beta-1 and maintain it in a latent state during storage in extracellular milieus. TGF-beta-1 is released from LAP by integrins (ITGAV:ITGB6 or ITGAV:ITGB8): integrin-binding to LAP stabilizes an alternative conformation of the LAP bowtie tail and results in distortion of the LAP chain and subsequent release of the active TGF-beta-1. Once activated following release of LAP, TGF-beta-1 acts by binding to TGF-beta receptors (TGFBR1 and TGFBR2), which transduce signal. While expressed by many cells types, TGF-beta-1 only has a very localized range of action within cell environment thanks to fine regulation of its activation by Latency-associated peptide chain (LAP) and 'milieu molecules'. Plays an important role in bone remodeling: acts as a potent stimulator of osteoblastic bone formation, causing chemotaxis, proliferation and differentiation in committed osteoblasts. Can promote either T-helper 17 cells (Th17) or regulatory T-cells (Treg) lineage differentiation in a concentration-dependent manner. At high concentrations, leads to FOXP3-mediated suppression of RORC and down-regulation of IL-17 expression, favoring Treg cell development. At low concentrations in concert with IL-6 and IL-21, leads to expression of the IL-17 and IL-23 receptors, favoring differentiation to Th17 cells. Stimulates sustained production of collagen through the activation of CREB3L1 by regulated intramembrane proteolysis (RIP). Mediates SMAD2/3 activation by inducing its phosphorylation and subsequent translocation to the nucleus. Positively regulates odontoblastic differentiation in dental papilla cells, via promotion of IPO7-mediated translocation of phosphorylated SMAD2 to the nucleus and subsequent transcription of target genes. Can induce epithelial-to-mesenchymal transition (EMT) and cell migration in various cell types. This is Transforming growth factor beta-1 proprotein (TGFB1) from Chlorocebus aethiops (Green monkey).